The sequence spans 738 residues: Protostadienol synthase A (738 aa).

A PFTB 1 repeat occupies 132–173 (KQEMCRYLLNVVNEDGGWGLFIQSPSTVFGTVMNYCMLRILG). The Proton donor role is filled by D463. PFTB repeat units follow at residues 490-531 (LQQA…YENV), 567-607 (VSRS…ACMG), and 616-663 (CQRA…AVIG).

Belongs to the terpene cyclase/mutase family.

It catalyses the reaction (S)-2,3-epoxysqualene = (17Z)-protosta-17(20),24-dien-3beta-ol. Functionally, protostadienol synthase which cyclizes (3S)-oxidosqualene to (17Z)-protosta-17(20),24-dien-3-beta-ol (protostadienol), the biosynthetic precursor of helvolic acid, a secondary metabolite which promotes virulence. The chain is Protostadienol synthase A (pdsA) from Neosartorya fischeri (strain ATCC 1020 / DSM 3700 / CBS 544.65 / FGSC A1164 / JCM 1740 / NRRL 181 / WB 181) (Aspergillus fischerianus).